The chain runs to 407 residues: Imidazolonepropionase (407 aa).

2 residues coordinate Fe(3+): His-74 and His-76. Zn(2+)-binding residues include His-74 and His-76. Residues Arg-83, Tyr-146, and His-179 each coordinate 4-imidazolone-5-propanoate. N-formimidoyl-L-glutamate is bound at residue Tyr-146. Residue His-244 coordinates Fe(3+). His-244 contacts Zn(2+). Gln-247 is a binding site for 4-imidazolone-5-propanoate. Asp-319 contacts Fe(3+). Asp-319 provides a ligand contact to Zn(2+). The N-formimidoyl-L-glutamate site is built by Asn-321 and Gly-323. 4-imidazolone-5-propanoate is bound at residue Thr-324.

Belongs to the metallo-dependent hydrolases superfamily. HutI family. Requires Zn(2+) as cofactor. The cofactor is Fe(3+).

The protein localises to the cytoplasm. It carries out the reaction 4-imidazolone-5-propanoate + H2O = N-formimidoyl-L-glutamate. It functions in the pathway amino-acid degradation; L-histidine degradation into L-glutamate; N-formimidoyl-L-glutamate from L-histidine: step 3/3. In terms of biological role, catalyzes the hydrolytic cleavage of the carbon-nitrogen bond in imidazolone-5-propanoate to yield N-formimidoyl-L-glutamate. It is the third step in the universal histidine degradation pathway. This chain is Imidazolonepropionase, found in Salmonella enteritidis PT4 (strain P125109).